We begin with the raw amino-acid sequence, 309 residues long: MSYNGSYHQNHHSTLQVKSKFDSEWRRFSIPMHSASGVSYDGFRSLVEKLHHLESVQFTLCYNSTGGDLLPITNDDNLRKSFESARPLLRLLIQRRGESWEEKYGYGTDSDKRWKGISSLMAQKPPKRSYSISNPEDFRQVSAIIDVDIVPEAHRRVRLCKHGQERPLGFYIRDGTSVRVTERGVVKVSGIFISRLVDGGLAESTGLLGVNDEVLEVNGIEVLGKTLDQVTDMMVANAHNLIITVKPANQRNTLSRGPSQQGTPNASEMSAATAAATGGIQRPMKMNGSSDGSYHPKQHDANDSDSGED.

Residues 14 to 96 (TLQVKSKFDS…PLLRLLIQRR (83 aa)) enclose the PB1 domain. A Pseudo-CRIB domain is found at 132–149 (ISNPEDFRQVSAIIDVDI). Positions 156–249 (RVRLCKHGQE…NLIITVKPAN (94 aa)) constitute a PDZ domain. Residues 249-270 (NQRNTLSRGPSQQGTPNASEMS) show a composition bias toward polar residues. The tract at residues 249 to 309 (NQRNTLSRGP…DANDSDSGED (61 aa)) is disordered.

The protein belongs to the PAR6 family. As to quaternary structure, interacts with par-3, required for its peripheral localization, and with cdc-42, required for the activation of a par-3/par-6/pkc-3 complex. As to expression, colocalized with par-3 at all stages in early embryos, at the anterior cortex of the embryo. Patchy expression observed at the periphery after completion of meiosis I and in meiosis II, which on completion of metaphase II, is restricted to the anterior 85% of embryo length; this decreases to 55% in embryos between prophase and telophase of the first mitosis. During the first cleavage, expression is detected in the advancing furrow. Along with pkc-3, is unable to associate with the apical cortex of cells that lack par-3. Transiently coexpressed and colocalized with par-3 and pkc-3, asymmetrically in the developing somatic gonad, including the spermathecal precursor cells of L4 larvae.

The protein localises to the cytoplasm. Its subcellular location is the cell membrane. It localises to the cell junction. It is found in the tight junction. In terms of biological role, necessary for apicobasal and anterior-posterior asymmetries associated with cell adhesion and gastrulation during the first few cell cycles of embryogenesis. Required for localizing/ maintaining par-3 at the cell periphery. Regulates mes-1 expression and/or localization pattern during early embryogenesis. Acts together with par-3 and pkc-3 in maintaining epithelial cell polarity in the distal spermatheca. Plays a role in endosome and Golgi body positioning. This chain is Partitioning defective protein 6, found in Caenorhabditis elegans.